The chain runs to 619 residues: ATP-dependent zinc metalloprotease FtsH (619 aa).

The Cytoplasmic portion of the chain corresponds to 1 to 5; sequence MKYFK. Residues 6–26 traverse the membrane as a helical segment; sequence GISFYIIIFILILVIITFFTA. The Extracellular portion of the chain corresponds to 27–110; that stretch reads TDNPPKMSYS…VTQPPQPPWW (84 aa). A helical membrane pass occupies residues 111–131; the sequence is VSMLPTVGLVIILILIWFFFI. Residues 132–619 are Cytoplasmic-facing; sequence QQSQGGGGGN…GSSQTPQLEG (488 aa). 204–211 serves as a coordination point for ATP; sequence GPPGTGKT. Position 426 (histidine 426) interacts with Zn(2+). The active site involves glutamate 427. Positions 430 and 502 each coordinate Zn(2+).

The protein in the central section; belongs to the AAA ATPase family. This sequence in the C-terminal section; belongs to the peptidase M41 family. In terms of assembly, homohexamer. It depends on Zn(2+) as a cofactor.

The protein resides in the cell membrane. Functionally, acts as a processive, ATP-dependent zinc metallopeptidase for both cytoplasmic and membrane proteins. Plays a role in the quality control of integral membrane proteins. In Ruminiclostridium cellulolyticum (strain ATCC 35319 / DSM 5812 / JCM 6584 / H10) (Clostridium cellulolyticum), this protein is ATP-dependent zinc metalloprotease FtsH.